The primary structure comprises 885 residues: High affinity cAMP-specific and IBMX-insensitive 3',5'-cyclic phosphodiesterase 8B (885 aa).

Disordered regions lie at residues 18-41 (RDSD…APLP) and 72-95 (TELG…GRRR). Residues 23 to 34 (SSSPRQTTSVSQ) show a composition bias toward polar residues. A compositionally biased stretch (low complexity) spans 75–90 (GSGSSAGSAAPAATTS). Residues 267 to 338 (ACNSVFTALD…DTINTCIKKG (72 aa)) form the PAS domain. Positions 393–436 (IHRDSGDNSQTEPHSFRYKNRRKESIDVKSISSRGSDAPSLQNR) are disordered. A compositionally biased stretch (polar residues) spans 422–436 (SISSRGSDAPSLQNR). Serine 517 bears the Phosphoserine mark. A PDEase domain is found at 539–875 (TINDVPPCIS…KHWKTLDDLK (337 aa)). The active-site Proton donor is histidine 615. 3 residues coordinate a divalent metal cation: histidine 619, histidine 655, and aspartate 656. Serine 754 carries the post-translational modification Phosphoserine. Aspartate 781 contacts a divalent metal cation.

The protein belongs to the cyclic nucleotide phosphodiesterase family. PDE8 subfamily. Requires a divalent metal cation as cofactor. Abundantly expressed in the thyroid. Also very weakly expressed in brain, spinal cord and placenta. In the thyroid isoform 1 predominates, and isoforms 2 and 6 are also highly expressed. In the placenta isoforms 1 and 2 are expressed equally. In the brain isoform 2 predominates.

The catalysed reaction is 3',5'-cyclic AMP + H2O = AMP + H(+). It participates in purine metabolism; 3',5'-cyclic AMP degradation; AMP from 3',5'-cyclic AMP: step 1/1. Inhibited by dipyridimole. Insensitive to selective PDE inhibitors including rolipram and milrinone as well as to the non-selective inhibitor, IBMX. Unaffected by cGMP. Functionally, hydrolyzes the second messenger cAMP, which is a key regulator of many important physiological processes. May be involved in specific signaling in the thyroid gland. In Homo sapiens (Human), this protein is High affinity cAMP-specific and IBMX-insensitive 3',5'-cyclic phosphodiesterase 8B (PDE8B).